Here is a 447-residue protein sequence, read N- to C-terminus: Enolase (447 aa).

Position 168 (glutamine 168) interacts with (2R)-2-phosphoglycerate. Residue glutamate 210 is the Proton donor of the active site. Aspartate 247, glutamate 292, and aspartate 319 together coordinate Mg(2+). 4 residues coordinate (2R)-2-phosphoglycerate: lysine 344, arginine 373, serine 374, and lysine 395. The active-site Proton acceptor is lysine 344.

This sequence belongs to the enolase family. In terms of assembly, component of the RNA degradosome, a multiprotein complex involved in RNA processing and mRNA degradation. Mg(2+) is required as a cofactor.

It is found in the cytoplasm. It localises to the secreted. Its subcellular location is the cell surface. The enzyme catalyses (2R)-2-phosphoglycerate = phosphoenolpyruvate + H2O. It functions in the pathway carbohydrate degradation; glycolysis; pyruvate from D-glyceraldehyde 3-phosphate: step 4/5. Functionally, catalyzes the reversible conversion of 2-phosphoglycerate (2-PG) into phosphoenolpyruvate (PEP). It is essential for the degradation of carbohydrates via glycolysis. This is Enolase from Blochmanniella floridana.